A 316-amino-acid chain; its full sequence is PDZ and LIM domain protein 3 (316 aa).

In terms of domain architecture, PDZ spans 1–84; that stretch reads MPQNVVLPGP…QLCLKIDRAE (84 aa). Phosphoserine is present on residues Ser-18 and Ser-93. Arg-164 is subject to Omega-N-methylarginine. In terms of domain architecture, LIM zinc-binding spans 244 to 303; sequence PLCDKCGSGIVGAVVKARDKYRHPECFVCADCNLNLKQKGYFFVEGELYCETHARARTRP.

Interacts with ACTN2. Forms a heterodimer with PDLIM4 (via LIM domain).

Its subcellular location is the cytoplasm. It localises to the myofibril. The protein localises to the sarcomere. The protein resides in the z line. Functionally, may play a role in the organization of actin filament arrays within muscle cells. This chain is PDZ and LIM domain protein 3 (Pdlim3), found in Mus musculus (Mouse).